Here is a 217-residue protein sequence, read N- to C-terminus: GRB2-related adapter protein (217 aa).

Residues 1–58 enclose the SH3 1 domain; sequence MESVALYSFQATESDELAFNKGDTLKILNMEDDQNWYKAELRGAEGFVPKNYIRVKPH. The SH2 domain maps to 60 to 152; that stretch reads WYSGRISRQL…RRQIFLCDEQ (93 aa). The SH3 2 domain maps to 158 to 217; that stretch reads SRACFAQAQFDFSAQDPSQLSLRRGDIVEVVEREDPHWWRGRAGGRLGFFPRSYVQPVHL.

The protein belongs to the GRB2/sem-5/DRK family. Associates through its SH2 domain with ligand-activated receptors for stem cell factor (KIT) and erythropoietin (EPOR). Also forms a stable complex with the Bcr-Abl oncoprotein. GRAP is associated with the Ras guanine nucleotide exchange factor SOS1, primarily through its N-terminal SH3 domain. Interacts with phosphorylated LAT upon TCR activation. Interacts with SHB. In terms of tissue distribution, expressed in inner ear, in neruonal fibers innervating cochlear and utricular auditory hair cells (at protein level).

It is found in the membrane. It localises to the synapse. Functionally, couples signals from receptor and cytoplasmic tyrosine kinases to the Ras signaling pathway. Plays a role in the inner ear and in hearing. The protein is GRB2-related adapter protein of Mus musculus (Mouse).